The chain runs to 726 residues: Catalase-peroxidase (726 aa).

The interval 1-33 (MSTTDDTHNTLSTGKCPFHQGGHDRSAGAGTAS) is disordered. The tryptophyl-tyrosyl-methioninium (Trp-Tyr) (with M-252) cross-link spans 105 to 226 (WHGAGTYRSI…LGATEMGLIY (122 aa)). Catalysis depends on H106, which acts as the Proton acceptor. The segment at residues 226–252 (YVNPEGPDHSGEPLSAAAAIRATFGNM) is a cross-link (tryptophyl-tyrosyl-methioninium (Tyr-Met) (with W-105)). H267 provides a ligand contact to heme b.

It belongs to the peroxidase family. Peroxidase/catalase subfamily. In terms of assembly, homodimer or homotetramer. Heme b serves as cofactor. Formation of the three residue Trp-Tyr-Met cross-link is important for the catalase, but not the peroxidase activity of the enzyme.

The catalysed reaction is H2O2 + AH2 = A + 2 H2O. It carries out the reaction 2 H2O2 = O2 + 2 H2O. Its function is as follows. Bifunctional enzyme with both catalase and broad-spectrum peroxidase activity. This chain is Catalase-peroxidase, found in Salmonella paratyphi A (strain ATCC 9150 / SARB42).